We begin with the raw amino-acid sequence, 60 residues long: Metallothionein A (60 aa).

A beta region spans residues 1 to 28 (MDPCECSKTGKCNCGTSCTCTNCSCKCC). A divalent metal cation is bound by residues C4, C6, C12, C14, C18, C20, C23, C25, C28, C32, C33, C35, C36, C40, C43, C47, C49, C54, C58, and C59. The interval 29–60 (KKSCCSCCPSGCSKCASGCVCKGNSCDKSCCQ) is alpha.

The protein belongs to the metallothionein superfamily. Type 1 family.

Functionally, metallothioneins have a high content of cysteine residues that bind various heavy metals. The sequence is that of Metallothionein A (mta) from Cyprinodon sp. (Pupfish).